The following is a 621-amino-acid chain: Probable bifunctional dTTP/UTP pyrophosphatase/methyltransferase protein (621 aa).

Residues 11–223 are MAF-like; the sequence is LHKRVVLASA…PPRPEDLRRS (213 aa). Ser21 carries the phosphoserine modification. Catalysis depends on Asp88, which acts as the Proton acceptor; for pyrophosphatase activity. Ser228 carries the post-translational modification Phosphoserine. Thr234 bears the Phosphothreonine mark. A disordered region spans residues 235 to 279; that stretch reads FEDLSDVEGGGSEPTQRDAGSRDEKAEAGEAGQATAEAECHRTRE. Ser239 bears the Phosphoserine mark. Positions 249-262 are enriched in basic and acidic residues; the sequence is TQRDAGSRDEKAEA. An ASMT-like region spans residues 277 to 621; it reads TRETLPPFPT…DAILATKVAP (345 aa). Position 421 is a phosphoserine (Ser421). Residues Asp482, 508–510, and Arg525 contribute to the S-adenosyl-L-methionine site; that span reads GDF.

It in the N-terminal section; belongs to the Maf family. YhdE subfamily. The protein in the C-terminal section; belongs to the class I-like SAM-binding methyltransferase superfamily. Cation-independent O-methyltransferase family. In terms of assembly, homodimer. Requires a divalent metal cation as cofactor. Widely expressed. In adult, highly expressed in pancreas, placenta, fibroblast, thymus, prostate, testis, ovary and colon. Expressed at lower levels in spleen, small intestine and leukocytes. In fetus, expressed at high levels in the lung and kidney and at lower level in brain and liver.

The catalysed reaction is dTTP + H2O = dTMP + diphosphate + H(+). It carries out the reaction UTP + H2O = UMP + diphosphate + H(+). It catalyses the reaction CTP + H2O = CMP + diphosphate + H(+). The enzyme catalyses psi-UTP + H2O = psi-UMP + diphosphate + H(+). The catalysed reaction is 5-methyl-UTP + H2O = 5-methyl-UMP + diphosphate + H(+). It carries out the reaction 5-methyl-CTP + H2O = 5-methyl-CMP + diphosphate + H(+). Functionally, nucleoside triphosphate pyrophosphatase that hydrolyzes dTTP and UTP. Can also hydrolyze CTP and the modified nucleotides pseudo-UTP, 5-methyl-UTP (m(5)UTP) and 5-methyl-CTP (m(5)CTP). Has weak activity with dCTP, 8-oxo-GTP and N(4)-methyl-dCTP. May have a dual role in cell division arrest and in preventing the incorporation of modified nucleotides into cellular nucleic acids. In addition, the presence of the putative catalytic domain of S-adenosyl-L-methionine binding in the C-terminal region argues for a methyltransferase activity. The sequence is that of Probable bifunctional dTTP/UTP pyrophosphatase/methyltransferase protein (ASMTL) from Homo sapiens (Human).